We begin with the raw amino-acid sequence, 350 residues long: Autophagy-related protein 3 (350 aa).

Residues 85-166 (NFAGDAGLEE…EEDDEAIIRD (82 aa)) form a flexible region region. Residues 97–171 (VDDGDEFKGS…AIIRDTDASG (75 aa)) are disordered. Positions 102–113 (EFKGSKGDDDGW) are enriched in basic and acidic residues. Over residues 146–161 (DDDDDIPDMEDEEDDE) the composition is skewed to acidic residues. The active-site Glycyl thioester intermediate is C244. The tract at residues 248-326 (PVMKTLLDRA…DQEVAIRVDQ (79 aa)) is handle region. N6-acetyllysine is present on residues K262 and K267.

Belongs to the ATG3 family. Monomer. Interacts with ATG8 through an intermediate thioester bond through the C-terminal Gly of ATG8. Also interacts with the 40 amino acid C-terminal region of the E1-like ATG7 enzyme. Also interacts with the ATG12-ATG5 conjugate. Interacts with HAT1. Post-translationally, acetylated by HAT1 at Lys-262 and Lys-267, which affects the interaction with ATG8 and prevents autophagy during both appressorium development and nutrient starvation.

It localises to the preautophagosomal structure. It is found in the cytoplasm. In terms of biological role, E2 conjugating enzyme required for the cytoplasm to vacuole transport (Cvt) and autophagy. Required for selective autophagic degradation of the nucleus (nucleophagy) as well as for mitophagy which contributes to regulate mitochondrial quantity and quality by eliminating the mitochondria to a basal level to fulfill cellular energy requirements and preventing excess ROS production. Responsible for the E2-like covalent binding of phosphatidylethanolamine to the C-terminal Gly of ATG8. The ATG12-ATG5 conjugate plays a role of an E3 and promotes the transfer of ATG8 from ATG3 to phosphatidylethanolamine (PE). This step is required for the membrane association of ATG8. The formation of the ATG8-phosphatidylethanolamine conjugate is essential for autophagy and for the cytoplasm to vacuole transport (Cvt). The ATG8-PE conjugate mediates tethering between adjacent membranes and stimulates membrane hemifusion, leading to expansion of the autophagosomal membrane during autophagy. Plays a role in appressorium formation and pathogenicity. The protein is Autophagy-related protein 3 of Pyricularia oryzae (strain 70-15 / ATCC MYA-4617 / FGSC 8958) (Rice blast fungus).